Consider the following 239-residue polypeptide: Uridylate kinase (239 aa).

ATP is bound at residue 10-13 (KISG). An involved in allosteric activation by GTP region spans residues 18 to 23 (GEAGFG). Gly-52 contributes to the UMP binding site. ATP is bound by residues Gly-53 and Arg-57. UMP contacts are provided by residues Asp-72 and 133 to 140 (TGNPYFST). Residues Asn-161, Tyr-167, and Asp-170 each contribute to the ATP site.

The protein belongs to the UMP kinase family. In terms of assembly, homohexamer.

The protein resides in the cytoplasm. The catalysed reaction is UMP + ATP = UDP + ADP. Its pathway is pyrimidine metabolism; CTP biosynthesis via de novo pathway; UDP from UMP (UMPK route): step 1/1. Its activity is regulated as follows. Allosterically activated by GTP. Inhibited by UTP. Catalyzes the reversible phosphorylation of UMP to UDP. The sequence is that of Uridylate kinase from Lacticaseibacillus paracasei (strain ATCC 334 / BCRC 17002 / CCUG 31169 / CIP 107868 / KCTC 3260 / NRRL B-441) (Lactobacillus paracasei).